The chain runs to 128 residues: Large ribosomal subunit protein bL19 (128 aa).

This sequence belongs to the bacterial ribosomal protein bL19 family.

Its function is as follows. This protein is located at the 30S-50S ribosomal subunit interface and may play a role in the structure and function of the aminoacyl-tRNA binding site. The polypeptide is Large ribosomal subunit protein bL19 (Ralstonia nicotianae (strain ATCC BAA-1114 / GMI1000) (Ralstonia solanacearum)).